Here is a 181-residue protein sequence, read N- to C-terminus: Adenine phosphoribosyltransferase (181 aa).

The protein belongs to the purine/pyrimidine phosphoribosyltransferase family. Homodimer.

The protein localises to the cytoplasm. The enzyme catalyses AMP + diphosphate = 5-phospho-alpha-D-ribose 1-diphosphate + adenine. It participates in purine metabolism; AMP biosynthesis via salvage pathway; AMP from adenine: step 1/1. Its function is as follows. Catalyzes a salvage reaction resulting in the formation of AMP, that is energically less costly than de novo synthesis. The protein is Adenine phosphoribosyltransferase of Rhizobium leguminosarum bv. trifolii (strain WSM2304).